The following is a 152-amino-acid chain: Small ribosomal subunit protein uS15 (152 aa).

Residues 1-11 (MAKMHTKRKGK) are compositionally biased toward basic residues. A disordered region spans residues 1–22 (MAKMHTKRKGKSSSTRPIRTEP).

The protein belongs to the universal ribosomal protein uS15 family. Part of the 30S ribosomal subunit.

The polypeptide is Small ribosomal subunit protein uS15 (Methanosarcina barkeri (strain Fusaro / DSM 804)).